A 56-amino-acid chain; its full sequence is Ovomucoid (56 aa).

In terms of domain architecture, Kazal-like spans 6-56 (VDCSEYPKPACTLEYVPICGSDNKTYGNKCNFCNAVVESNGTLTLSHFGKC). Disulfide bonds link C8-C38, C16-C35, and C24-C56. N45 carries N-linked (GlcNAc...) asparagine glycosylation.

The protein localises to the secreted. The protein is Ovomucoid of Cyrtonyx montezumae (Montezuma quail).